The chain runs to 1125 residues: Probable inorganic carbon transporter subunit DabA (1125 aa).

Zn(2+)-binding residues include cysteine 578, aspartate 580, histidine 769, and cysteine 784. The interval 1106 to 1125 (SDPRPPALVEPKQTETHHAA) is disordered.

The protein belongs to the inorganic carbon transporter (TC 9.A.2) DabA family. Forms a complex with DabB. Zn(2+) is required as a cofactor.

Its subcellular location is the cell inner membrane. In terms of biological role, part of an energy-coupled inorganic carbon pump. The polypeptide is Probable inorganic carbon transporter subunit DabA (Nitrosococcus oceani (strain ATCC 19707 / BCRC 17464 / JCM 30415 / NCIMB 11848 / C-107)).